Here is a 570-residue protein sequence, read N- to C-terminus: Urease subunit alpha (570 aa).

One can recognise a Urease domain in the interval 131-570 (GGMDSHIHFI…LPMAQRYFLF (440 aa)). 3 residues coordinate Ni(2+): His136, His138, and Lys219. Lys219 is modified (N6-carboxylysine). His221 is a substrate binding site. 2 residues coordinate Ni(2+): His248 and His274. His322 acts as the Proton donor in catalysis. Residue Asp362 participates in Ni(2+) binding.

It belongs to the metallo-dependent hydrolases superfamily. Urease alpha subunit family. Heterotrimer of UreA (gamma), UreB (beta) and UreC (alpha) subunits. Three heterotrimers associate to form the active enzyme. The cofactor is Ni cation. Carboxylation allows a single lysine to coordinate two nickel ions.

The protein localises to the cytoplasm. It catalyses the reaction urea + 2 H2O + H(+) = hydrogencarbonate + 2 NH4(+). It functions in the pathway nitrogen metabolism; urea degradation; CO(2) and NH(3) from urea (urease route): step 1/1. The polypeptide is Urease subunit alpha (Rhizobium meliloti (strain 1021) (Ensifer meliloti)).